The following is a 506-amino-acid chain: Cobyric acid synthase (506 aa).

In terms of domain architecture, GATase cobBQ-type spans 251–448 (DITIAIVQLP…LHGLFDSDAF (198 aa)). Cys-332 serves as the catalytic Nucleophile. His-440 is a catalytic residue.

It belongs to the CobB/CobQ family. CobQ subfamily. In terms of assembly, homodimer.

It functions in the pathway cofactor biosynthesis; adenosylcobalamin biosynthesis. Its function is as follows. Catalyzes amidations at positions B, D, E, and G on adenosylcobyrinic A,C-diamide. NH(2) groups are provided by glutamine, and one molecule of ATP is hydrogenolyzed for each amidation. The chain is Cobyric acid synthase (cbiP) from Salmonella typhimurium (strain LT2 / SGSC1412 / ATCC 700720).